Consider the following 189-residue polypeptide: MIDHAHLRLFQFCDSQFPTGAFSHSFGLETYIQRDIVHDEQSFQQWLILFLNEQLTYADGLTMRLVYNALEQDDAQAILRLDRILFVQNLPKETRQGSKQMGNRMVKLASELYDSDWLDWYHAQMLDKKAILHPAICFTMLGHHLEVDIETIIDYYLYQNVSSLTQNAVRAIPLGQTAGQRIVHQMIPS.

The protein belongs to the UreF family. In terms of assembly, ureD, UreF and UreG form a complex that acts as a GTP-hydrolysis-dependent molecular chaperone, activating the urease apoprotein by helping to assemble the nickel containing metallocenter of UreC. The UreE protein probably delivers the nickel.

The protein resides in the cytoplasm. Its function is as follows. Required for maturation of urease via the functional incorporation of the urease nickel metallocenter. The protein is Urease accessory protein UreF of Staphylococcus xylosus.